The sequence spans 764 residues: Phenylalanine--tRNA ligase beta subunit (764 aa).

A tRNA-binding domain is found at 38-148; that stretch reads CIAPKNVVVG…GELVLGKELN (111 aa). The B5 domain occupies 375–455; the sequence is LKDRTLTFQL…RFVGIDNLVS (81 aa). Residues D433, D439, E442, and E443 each coordinate Mg(2+). The FDX-ACB domain maps to 673–763; sequence SIYPSSVRDL…LEKEFNARLK (91 aa).

This sequence belongs to the phenylalanyl-tRNA synthetase beta subunit family. Type 1 subfamily. Tetramer of two alpha and two beta subunits. Mg(2+) serves as cofactor.

It is found in the cytoplasm. The catalysed reaction is tRNA(Phe) + L-phenylalanine + ATP = L-phenylalanyl-tRNA(Phe) + AMP + diphosphate + H(+). This Helicobacter pylori (strain ATCC 700392 / 26695) (Campylobacter pylori) protein is Phenylalanine--tRNA ligase beta subunit (pheT).